A 397-amino-acid polypeptide reads, in one-letter code: 1-deoxy-D-xylulose 5-phosphate reductoisomerase (397 aa).

Residues Thr12, Gly13, Ser14, Ile15, Gly38, Lys39, Asn40, and Asn126 each contribute to the NADPH site. Lys127 contacts 1-deoxy-D-xylulose 5-phosphate. Glu128 provides a ligand contact to NADPH. Asp152 contacts Mn(2+). 1-deoxy-D-xylulose 5-phosphate contacts are provided by Ser153, Glu154, Ser188, and His211. Residue Glu154 participates in Mn(2+) binding. Gly217 serves as a coordination point for NADPH. Ser224, Asn229, Lys230, and Glu233 together coordinate 1-deoxy-D-xylulose 5-phosphate. Glu233 lines the Mn(2+) pocket.

The protein belongs to the DXR family. The cofactor is Mg(2+). Mn(2+) is required as a cofactor.

It catalyses the reaction 2-C-methyl-D-erythritol 4-phosphate + NADP(+) = 1-deoxy-D-xylulose 5-phosphate + NADPH + H(+). Its pathway is isoprenoid biosynthesis; isopentenyl diphosphate biosynthesis via DXP pathway; isopentenyl diphosphate from 1-deoxy-D-xylulose 5-phosphate: step 1/6. Its function is as follows. Catalyzes the NADPH-dependent rearrangement and reduction of 1-deoxy-D-xylulose-5-phosphate (DXP) to 2-C-methyl-D-erythritol 4-phosphate (MEP). The chain is 1-deoxy-D-xylulose 5-phosphate reductoisomerase from Haemophilus influenzae (strain PittEE).